A 299-amino-acid polypeptide reads, in one-letter code: MPWLQLKAHIAPQHAETLEDLLLAEGAQVITLQDAHDDPVFEPESGTTPLWNETVLTGLYDDLEDIEPMLERVRQQWAAEMADEPCPEIDYELVADRDWEREWMDDFAPLKMGERLWVVPSWHEAPEPGAVNLLLDPGLAFGTGTHPTTALCLAWLDGLDLDASRVLDFGCGSGILAIAALKLGARHATGTDIDPQALQASRDNAQRNDVADEHLSLCYPERLADERHDVVVANILAGPLVELAPTLCAHLAPGGRLALSGILAGQAEEVMDAYREQGMLLDAPVEREGWVRITGKAPA.

The S-adenosyl-L-methionine site is built by Thr149, Gly170, Asp192, and Asn234.

It belongs to the methyltransferase superfamily. PrmA family.

The protein resides in the cytoplasm. It carries out the reaction L-lysyl-[protein] + 3 S-adenosyl-L-methionine = N(6),N(6),N(6)-trimethyl-L-lysyl-[protein] + 3 S-adenosyl-L-homocysteine + 3 H(+). In terms of biological role, methylates ribosomal protein L11. The sequence is that of Ribosomal protein L11 methyltransferase from Chromohalobacter salexigens (strain ATCC BAA-138 / DSM 3043 / CIP 106854 / NCIMB 13768 / 1H11).